The primary structure comprises 238 residues: Probable septum site-determining protein MinC (238 aa).

The protein belongs to the MinC family. In terms of assembly, interacts with MinD and FtsZ.

Functionally, cell division inhibitor that blocks the formation of polar Z ring septums. Rapidly oscillates between the poles of the cell to destabilize FtsZ filaments that have formed before they mature into polar Z rings. Prevents FtsZ polymerization. This Xylella fastidiosa (strain M12) protein is Probable septum site-determining protein MinC.